Consider the following 242-residue polypeptide: DNA repair protein RecO (242 aa).

The protein belongs to the RecO family. Monomer.

Its function is as follows. Involved in DNA repair and RecF pathway recombination. In Shigella dysenteriae serotype 1 (strain Sd197), this protein is DNA repair protein RecO.